The primary structure comprises 372 residues: Cytochrome b (372 aa).

4 consecutive transmembrane segments (helical) span residues 25 to 45 (FGSM…FLAI), 69 to 90 (WIMQ…YIHI), 105 to 125 (WLSG…GYVL), and 170 to 190 (FFAL…IHII). The heme b site is built by H75 and H89. 2 residues coordinate heme b: H174 and H188. H193 contributes to the a ubiquinone binding site. 4 helical membrane-spanning segments follow: residues 218-238 (YKDM…LSFL), 280-300 (LGGT…PFTH), 312-332 (LSQT…WTAT), and 339-358 (FITI…IMTP).

It belongs to the cytochrome b family. In terms of assembly, the cytochrome bc1 complex contains 3 respiratory subunits (MT-CYB, CYC1 and UQCRFS1), 2 core proteins (UQCRC1 and UQCRC2) and probably 6 low-molecular weight proteins. It depends on heme b as a cofactor.

The protein resides in the mitochondrion inner membrane. Its function is as follows. Component of the ubiquinol-cytochrome c reductase complex (complex III or cytochrome b-c1 complex) that is part of the mitochondrial respiratory chain. The b-c1 complex mediates electron transfer from ubiquinol to cytochrome c. Contributes to the generation of a proton gradient across the mitochondrial membrane that is then used for ATP synthesis. The polypeptide is Cytochrome b (MT-CYB) (Aspidelaps scutatus (Shield-nose snake)).